We begin with the raw amino-acid sequence, 2527 residues long: MASGACQGCEEEEEEEALKKLIVRLNNVQEGKQIETLLQLLEDMLVFTYSDRASKLFEDKNFHVPLLIVLDSYMRVASVQQAGWSLLCKLIEVCPGTLQSLIGPQDIGNDWEVLGIHRLILKMLTVHHANVNLSIVGLKALDLLLDSGKLTLLILDEECDIFLLIFDAMHRYSANDEVQKLGCKALHVLFERVSEEQLTEFVENKDYTILLSTFGSFRRDKEIVYHVLCCLHSLAVTCSNVEVLMSGNVRCYNLVVEAMKAFPTNENIQEVSCSLFQKLTLGNFFNILVLNEVHVFVVKAVRQYPENAALQISALSCLALLTETIFLNQDLEERSETQEQSEEEDSEKLFWLEPCYKALVRHRKDKHVQEAACWALNNLLMYQNSLHEKIGDEDGQFPAHREVMLSMLMHSSSKDVFQAAAHALSTLLEQNVNFRKILLAKGVYLNVLELMQKHAHAPEVAESGCKMLSHLFEGSNPSLDTMAAVVPKILTVMKAHGTSLSVQLEALRAILHFVVPGLLEESREDSQCRPNVLRKQCFRTDIHKLVLVALNRFIGNPGIQKCGLKVISSLAHLPDATETLSLQGAVDSVLHTLQMYPDDQEIQCLGLHLMGCLMTKKNFCIGTGHLLAKILASTLQRFKDVAEVQTTGLQTTLSILELSVSFSKLLVHYSFDVVIFHQMSSSVVEQKDEQFLNLCCKCFAKVAVDDELKNTMLERACDQNNSIMVECLLLLGADANQVKGATSLIYQVCEKESSPKLVELLLNGGCREQDVRKALTVSIQKGDSQVISLLLRKLALDLANNSICLGGFGIGKIDPSWLGPLFPDKSSNLRKQTNTGSVLARKVLRYQMRNTLQEGVASGSDGKFSEDALAKFGEWTFIPDSSMDSVFGQSDDLDSEGSESSFLVKRKSNSISVGEVYRDLALQRCSPNAQRHSNSLGPVFDHEDLLRRKRKILSSDESLRSSRLPSHMRQSDSSSSLASEREHITSLDLSANELKDIDALSQKCCLSSHLEHLTKLELHQNSLTSFPQQLCETLKCLIHLDLHSNKFTSFPSFVLKMPRITNLDASRNDIGPTVVLDPAMKCPSLKQLNLSYNQLSSIPENLAQVVEKLEQLLLEGNKISGICSPLSLKELKILNLSKNHIPSLPGDFLEACSKVESFSARMNFLAAMPALPSSITSLKLSQNSFTCIPEAIFSLPHLRSLDMSHNNIECLPGPAHWKSLNLRELIFSKNQISTLDFSENPHVWSRVEKLHLSHNKLKEIPPEIGCLENLTSLDVSYNLELRSFPNEMGKLSKIWDLPLDGLHLNFDFKHVGCKAKDIIRFLQQRLKKAVPYNRMKLMIVGNTGSGKTTLLQQLMKMKKPELGMQGATVGIDVRDWSIQIRGKRRKDLVLNVWDFAGREEFYSTHPHFMTQRALYLAVYDLSKGQAEVDAMKPWLFNIKARASSSPVILVGTHLDVSDEKQRKACISKITKELLNKRGFPTIRDYHFVNATEESDALAKLRKTIINESLNFKIRDQPVVGQLIPDCYVELEKIILSERKAVPTEFPVINRKHLLQLVNEHQLQLDENELPHAVHFLNESGVLLHFQDPALQLSDLYFVEPKWLCKVMAQILTVKVDGCLKHPKGIISRRDVEKFLSKKKRFPKNYMMQYFKLLEKFQIALPIGEEYLLVPSSLSDHRPVIELPHCENSEIIIRLYEMPYFPMGFWSRLINRLLEISPFMLSGRERALRPNRMYWRQGIYLNWSPEAYCLVGSEVLDNRPESFLKITVPSCRKGCILLGRVVDHIDSLMEEWFPGLLEIDICGEGETLLKKWALYSFNDGEEHQKILLDELMKKAEEGDLLINPDQPRLTIPISQIAPDLILADLPRNIMLNNDELEFEEAPEFLLGDGSFGSVYRAAYEGEEVAVKIFNKHTSLRLLRQELVVLCHLHHPSLISLLAAGIRPRMLVMELASKGSLDRLLQQDKASLTRTLQHRIALHVADGLRYLHSAMIIYRDLKPHNVLLFTLYPNAAIIAKIADYGIAQYCCRMGIKTSEGTPGFRAPEVARGNVIYNQQADVYSFGLLLHDIWTTGSRIMEGLRFPNEFDELAIQGKLPDPVKEYGCAPWPMVEKLITKCLKENPQERPTSAQVFDILNSAELICLMRHILIPKNIIVECMVATNLNSKSATLWLGCGNTEKGQLSLFDLNTERYSYEEVADSRILCLALVHLAAEKESWVVCGTQSGALLVINVEEETKRHTLEKMTDSVTCLHCNSLAKQSKQSNFLLVGTADGNLMIFEDKAVKCKGAAPLKTLHIGDVSTPLMCLSESLNSSERHITWGGCGTKVFSFSNDFTIQKLIETKTNQLFSYAAFSDSNIIALAVDTALYIAKKNSPVVEVWDKKTEKLCELIDCVHFLKEVMVKLNKESKHQLSYSGRVKALCLQKNTALWIGTGGGHILLLDLSTRRVIRTIHNFCDSVRAMATAQLGSLKNVMLVLGYKRKSTEGIQEQKEIQSCLSIWDLNLPHEVQNLEKHIEVRTELADKMRKTSVE.

The segment at 1 to 969 (MASGACQGCE…RSSRLPSHMR (969 aa)) is required for RAB29-mediated activation. Positions 9–33 (CEEEEEEEALKKLIVRLNNVQEGKQ) form a coiled coil. Phosphoserine is present on residues serine 910, serine 935, serine 955, and serine 973. Residues 957–979 (ESLRSSRLPSHMRQSDSSSSLAS) are disordered. The segment covering 961 to 978 (SSRLPSHMRQSDSSSSLA) has biased composition (low complexity). LRR repeat units lie at residues 983-1004 (HITS…SQKC), 1012-1033 (HLTK…LCET), 1036-1057 (CLIH…VLKM), 1059-1080 (RITN…DPAM), 1084-1105 (SLKQ…LAQV), 1108-1129 (KLEQ…LSLK), 1130-1150 (ELKI…DFLE), 1156-1171 (ESFS…MPAL), 1174-1196 (SITS…FSLP), 1197-1218 (HLRS…AHWK), 1221-1245 (NLRE…HVWS), 1246-1267 (RVEK…IGCL), and 1269-1291 (NLTS…MGKL). Position 1292 is a phosphoserine; by autocatalysis (serine 1292). The 184-residue stretch at 1328-1511 (KAVPYNRMKL…KTIINESLNF (184 aa)) folds into the Roc domain. 1341–1348 (GNTGSGKT) provides a ligand contact to GTP. Position 1444 is a phosphoserine (serine 1444). Residues 1543 to 1740 (TEFPVINRKH…RMYWRQGIYL (198 aa)) enclose the COR domain. The Protein kinase domain occupies 1879 to 2146 (EAPEFLLGDG…LICLMRHILI (268 aa)). 12 residues coordinate ATP: leucine 1885, aspartate 1887, glycine 1888, glycine 1891, valine 1893, alanine 1904, lysine 1906, methionine 1947, glutamate 1948, alanine 1950, serine 1954, and arginine 1957. The active-site Proton acceptor is aspartate 1994. ATP contacts are provided by histidine 1998, leucine 2001, alanine 2016, and aspartate 2017. Residue 2098-2121 (EYGCAPWPMVEKLITKCLKENPQE) coordinates GTP. 7 WD repeats span residues 2139–2183 (CLMR…SLFD), 2188–2228 (RYSY…LVIN), 2233–2276 (TKRH…MIFE), 2281–2327 (KCKG…FSFS), 2333–2377 (QKLI…EVWD), 2402–2438 (KESK…LLLD), and 2443–2497 (RVIR…SIWD). GTP is bound at residue 2295–2298 (DVST).

It belongs to the protein kinase superfamily. TKL Ser/Thr protein kinase family. Homodimer. Homotetramer; when activated by GTP-bound RAB29. Interacts with PRKN, PRDX3 and TPCN2. Interacts with VPS35. Interacts (via N-terminus) with RAB29; this interaction is direct and stimulates kinase activity. Interacts (via ROC domain) with SEC16A. Interacts with APP; interaction promotes phosphorylation of 'Thr-743' of APP. Interacts with MAPT. Interacts with RAB8A, RAB10, and RAB12. Interacts (via N-terminus) with RAB32. Interacts with YWHAG; this interaction is dependent on phosphorylation of Ser-910 and either Ser-935 or Ser-1444. Interacts with SFN; this interaction is dependent on phosphorylation of Ser-910 and/or Ser-935. Mg(2+) is required as a cofactor. Autophosphorylated at Ser-1292. Autophosphorylation is stimulated by RAB29. Phosphorylation of Ser-910 and Ser-935 or Ser-1444 facilitates interaction with YWHAG. Phosphorylation of Ser-910 and/or Ser-935 facilitates interaction with SFN. In terms of processing, ubiquitinated by TRIM1; undergoes 'Lys-48'-linked polyubiquitination leading to proteasomal degradation. In terms of tissue distribution, expressed in the brain (at protein level). Detected throughout the adult brain. Expressed in deep cerebral cortex layers, superficial cingulate cortex layers, the piriform cortex, hippocampal formation, caudate putamen, substantia nigra, the basolateral and basomedial anterior amygdala nuclei, reticular thalamic nucleus and also in the cerebellar granular cell layer. Highly expressed in the striatum, cortex and olfactory tubercle. Little or no expression in the substantia nigra, where dopaminergic neurons preferentially degenerate in Parkinson disease. Expression is particularly high in brain dopaminoceptive areas. High and strikingly specific expression in striatum and parts of cortex and no signals in dopamine neurons.

It is found in the cytoplasmic vesicle. The protein resides in the perikaryon. Its subcellular location is the cell projection. The protein localises to the axon. It localises to the dendrite. It is found in the golgi apparatus membrane. The protein resides in the endoplasmic reticulum membrane. Its subcellular location is the secretory vesicle. The protein localises to the synaptic vesicle membrane. It localises to the endosome. It is found in the lysosome. The protein resides in the mitochondrion outer membrane. Its subcellular location is the cytoplasm. The protein localises to the cytoskeleton. It localises to the phagosome. It carries out the reaction L-threonyl-[protein] + ATP = O-phospho-L-threonyl-[protein] + ADP + H(+). It catalyses the reaction L-seryl-[protein] + ATP = O-phospho-L-seryl-[protein] + ADP + H(+). The catalysed reaction is GTP + H2O = GDP + phosphate + H(+). With respect to regulation, kinase activity is regulated by the GTPase activity of the ROC domain. GTP-bound LRRK2 kinase activity is stimulated by RAB29. Phosphorylation of RAB10 'Thr-73' is stimulated by RAB29 and RAB32. Inhibited by small molecule inhibitors MLi-2 and LRRK2-IN-1. Serine/threonine-protein kinase which phosphorylates a broad range of proteins involved in multiple processes such as neuronal plasticity, innate immunity, autophagy, and vesicle trafficking. Is a key regulator of RAB GTPases by regulating the GTP/GDP exchange and interaction partners of RABs through phosphorylation. Phosphorylates RAB3A, RAB3B, RAB3C, RAB3D, RAB8A, RAB8B, RAB10, RAB12, RAB29, RAB35, and RAB43. Regulates the RAB3IP-catalyzed GDP/GTP exchange for RAB8A through the phosphorylation of 'Thr-72' on RAB8A. Inhibits the interaction between RAB8A and GDI1 and/or GDI2 by phosphorylating 'Thr-72' on RAB8A. Regulates primary ciliogenesis through phosphorylation of RAB8A and RAB10, which promotes SHH signaling in the brain. Together with RAB29, plays a role in the retrograde trafficking pathway for recycling proteins, such as mannose-6-phosphate receptor (M6PR), between lysosomes and the Golgi apparatus in a retromer-dependent manner. Regulates neuronal process morphology in the intact central nervous system (CNS). Plays an important role in recruiting SEC16A to endoplasmic reticulum exit sites (ERES) and in regulating ER to Golgi vesicle-mediated transport and ERES organization. Positively regulates autophagy through a calcium-dependent activation of the CaMKK/AMPK signaling pathway. The process involves activation of nicotinic acid adenine dinucleotide phosphate (NAADP) receptors, increase in lysosomal pH, and calcium release from lysosomes. Phosphorylates PRDX3. By phosphorylating APP on 'Thr-743', which promotes the production and the nuclear translocation of the APP intracellular domain (AICD), regulates dopaminergic neuron apoptosis. Acts as a positive regulator of innate immunity by mediating phosphorylation of RIPK2 downstream of NOD1 and NOD2, thereby enhancing RIPK2 activation. Independent of its kinase activity, inhibits the proteasomal degradation of MAPT, thus promoting MAPT oligomerization and secretion. In addition, has GTPase activity via its Roc domain which regulates LRKK2 kinase activity. Recruited by RAB29/RAB7L1 to overloaded lysosomes where it phosphorylates and stabilizes RAB8A and RAB10 which promote lysosomal content release and suppress lysosomal enlargement through the EHBP1 and EHBP1L1 effector proteins. This is Leucine-rich repeat serine/threonine-protein kinase 2 (Lrrk2) from Mus musculus (Mouse).